Here is a 543-residue protein sequence, read N- to C-terminus: Chaperonin GroEL (543 aa).

ATP contacts are provided by residues 29–32, 86–90, Gly413, 476–478, and Asp492; these read TLGP, DGTTT, and NAA.

Belongs to the chaperonin (HSP60) family. Forms a cylinder of 14 subunits composed of two heptameric rings stacked back-to-back. Interacts with the co-chaperonin GroES.

Its subcellular location is the cytoplasm. The enzyme catalyses ATP + H2O + a folded polypeptide = ADP + phosphate + an unfolded polypeptide.. Together with its co-chaperonin GroES, plays an essential role in assisting protein folding. The GroEL-GroES system forms a nano-cage that allows encapsulation of the non-native substrate proteins and provides a physical environment optimized to promote and accelerate protein folding. The chain is Chaperonin GroEL from Streptococcus pyogenes serotype M1.